We begin with the raw amino-acid sequence, 211 residues long: Thymidylate kinase (211 aa).

7–14 (GIDGCGKT) is an ATP binding site.

It belongs to the thymidylate kinase family.

It catalyses the reaction dTMP + ATP = dTDP + ADP. Its function is as follows. Phosphorylation of dTMP to form dTDP in both de novo and salvage pathways of dTTP synthesis. This chain is Thymidylate kinase, found in Anaplasma marginale (strain St. Maries).